A 475-amino-acid polypeptide reads, in one-letter code: D(1B) dopamine receptor (475 aa).

Topologically, residues 1–38 (MLPPGRNRTAQPARLGLQRQLAQVDAPAGSATPLGPAQ) are extracellular. N-linked (GlcNAc...) asparagine glycosylation occurs at Asn-7. Residues 39 to 64 (VVTAGLLTLLIVWTLLGNVLVCAAIV) form a helical membrane-spanning segment. The Cytoplasmic portion of the chain corresponds to 65 to 75 (RSRHLRAKMTN). A helical membrane pass occupies residues 76-102 (IFIVSLAVSDLFVALLVMPWKAVAEVA). At 103–111 (GYWPFGTFC) the chain is on the extracellular side. Cys-111 and Cys-211 are oxidised to a cystine. A helical transmembrane segment spans residues 112-134 (DIWVAFDIMCSTASILNLCIISV). Topologically, residues 135-153 (DRYWAISRPFRYERKMTQR) are cytoplasmic. The chain crosses the membrane as a helical span at residues 154–179 (VALVMVGLAWTLSILISFIPVQLNWH). Residues 180–215 (RDKAGSQGQEGLLSNGTPWEEGWELEGRTENCDSSL) are Extracellular-facing. Residues 216-240 (NRTYAISSSLISFYIPVAIMIVTYT) traverse the membrane as a helical segment. Residues 241–289 (RIYRIAQVQIRRISSLERAAEHAQSCRSRGAYEPDPSLRASIKKETKVF) are Cytoplasmic-facing. The chain crosses the membrane as a helical span at residues 290–317 (KTLSMIMGVFVCCWLPFFILNCMVPFCS). Over 318-335 (SGDAEGPKTGFPCVSETT) the chain is Extracellular. Residues 336–357 (FDIFVWFGWANSSLNPIIYAFN) traverse the membrane as a helical segment. At 358 to 475 (ADFRKVFAQL…LTPNCFDKTA (118 aa)) the chain is on the cytoplasmic side. Cys-370 carries S-palmitoyl cysteine lipidation. The disordered stretch occupies residues 415-443 (SGDREVGEEEEEGPFDHMSQISPTTPDGD).

It belongs to the G-protein coupled receptor 1 family. Brain, in the lateral mammillary nuclei, the anterior pretectal nuclei, and several layers of the hippocampus.

The protein resides in the cell membrane. Its function is as follows. Dopamine receptor whose activity is mediated by G proteins which activate adenylyl cyclase. In Rattus norvegicus (Rat), this protein is D(1B) dopamine receptor (Drd5).